We begin with the raw amino-acid sequence, 112 residues long: MMATKEEISMVGFALVAYAGDARTAAVHALDAAEAGDFDKANELVEKAQQDINEAHNQQTQLLSQEAGGAEMDVTFIMVHGQDTLMTTMLLIDETRYMIRMFKRIKELENKQ.

The region spanning 6–104 (EEISMVGFAL…TRYMIRMFKR (99 aa)) is the PTS EIIA type-3 domain. Histidine 80 acts as the Tele-phosphohistidine intermediate in catalysis. Phosphohistidine; by HPr is present on histidine 80. Residue aspartate 83 participates in Mg(2+) binding.

As to quaternary structure, homotrimer. Mg(2+) is required as a cofactor.

The protein localises to the cytoplasm. The phosphoenolpyruvate-dependent sugar phosphotransferase system (sugar PTS), a major carbohydrate active transport system, catalyzes the phosphorylation of incoming sugar substrates concomitantly with their translocation across the cell membrane. The enzyme II LacEF PTS system is involved in lactose transport. This is PTS system lactose-specific EIIA component from Lacticaseibacillus casei (Lactobacillus casei).